We begin with the raw amino-acid sequence, 271 residues long: Tryptophan synthase alpha chain (271 aa).

Residues Glu-49 and Asp-60 each act as proton acceptor in the active site.

Belongs to the TrpA family. As to quaternary structure, tetramer of two alpha and two beta chains.

It carries out the reaction (1S,2R)-1-C-(indol-3-yl)glycerol 3-phosphate + L-serine = D-glyceraldehyde 3-phosphate + L-tryptophan + H2O. It participates in amino-acid biosynthesis; L-tryptophan biosynthesis; L-tryptophan from chorismate: step 5/5. Functionally, the alpha subunit is responsible for the aldol cleavage of indoleglycerol phosphate to indole and glyceraldehyde 3-phosphate. The polypeptide is Tryptophan synthase alpha chain (Burkholderia ambifaria (strain MC40-6)).